Consider the following 1017-residue polypeptide: Type VI secretion system spike protein VgrG3 (1017 aa).

The active site involves Asp842.

Belongs to the VgrG protein family. Interacts with TsiV3. Interacts with TseL.

It is found in the secreted. Its function is as follows. Part of the type VI secretion system specialized secretion system, which delivers several virulence factors in both prokaryotic and eukaryotic cells during infection. Forms the spike at the tip of the elongating tube formed by haemolysin co-regulated protein Hcp. Allows the delivery of the TseL antibacterial toxin to target cells where it exerts its toxicity. Additionally, acts directly as an effector and targets the cell wall peptidoglycan layer of prey cells for degradation via its C-terminus. Toxicity is counteracted by a cognate immunity protein TsiV3. The chain is Type VI secretion system spike protein VgrG3 from Vibrio cholerae serotype O1 (strain ATCC 39315 / El Tor Inaba N16961).